Here is a 474-residue protein sequence, read N- to C-terminus: Histone H2B.v2 (474 aa).

3 disordered regions span residues 99 to 123, 276 to 295, and 328 to 394; these read FNNG…QNEL, TTFT…ISGD, and FNDN…VNNN. Low complexity-rich tracts occupy residues 100 to 110, 276 to 286, and 329 to 368; these read NNGGNNNNNNE, TTFTQQEQQEQ, and NDNN…NNKN.

Belongs to the histone H2B family.

The protein is Histone H2B.v2 (H2Bv2) of Dictyostelium discoideum (Social amoeba).